The following is a 381-amino-acid chain: Pyrimidine monooxygenase RutA (381 aa).

FMN is bound by residues 66 to 67 (IK), N132, E141, 157 to 158 (RY), and S207.

This sequence belongs to the NtaA/SnaA/DszA monooxygenase family. RutA subfamily.

It carries out the reaction uracil + FMNH2 + NADH + O2 = (Z)-3-ureidoacrylate + FMN + NAD(+) + H2O + H(+). It catalyses the reaction thymine + FMNH2 + NADH + O2 = (Z)-2-methylureidoacrylate + FMN + NAD(+) + H2O + H(+). In terms of biological role, catalyzes the pyrimidine ring opening between N-3 and C-4 by an unusual flavin hydroperoxide-catalyzed mechanism, adding oxygen atoms in the process to yield ureidoacrylate peracid, that immediately reacts with FMN forming ureidoacrylate and FMN-N(5)-oxide. The FMN-N(5)-oxide reacts spontaneously with NADH to produce FMN. Requires the flavin reductase RutF to regenerate FMN in vivo. The polypeptide is Pyrimidine monooxygenase RutA (Methylobacterium radiotolerans (strain ATCC 27329 / DSM 1819 / JCM 2831 / NBRC 15690 / NCIMB 10815 / 0-1)).